Here is a 275-residue protein sequence, read N- to C-terminus: Dermonecrotic toxin LhSicTox-alphaIV2 (275 aa).

H5 is a catalytic residue. The Mg(2+) site is built by E25 and D27. H41 (nucleophile) is an active-site residue. Intrachain disulfides connect C45–C51 and C47–C192. D85 provides a ligand contact to Mg(2+).

It belongs to the arthropod phospholipase D family. Class II subfamily. Requires Mg(2+) as cofactor. Expressed by the venom gland.

Its subcellular location is the secreted. The catalysed reaction is an N-(acyl)-sphingosylphosphocholine = an N-(acyl)-sphingosyl-1,3-cyclic phosphate + choline. It carries out the reaction an N-(acyl)-sphingosylphosphoethanolamine = an N-(acyl)-sphingosyl-1,3-cyclic phosphate + ethanolamine. The enzyme catalyses a 1-acyl-sn-glycero-3-phosphocholine = a 1-acyl-sn-glycero-2,3-cyclic phosphate + choline. It catalyses the reaction a 1-acyl-sn-glycero-3-phosphoethanolamine = a 1-acyl-sn-glycero-2,3-cyclic phosphate + ethanolamine. Its function is as follows. Dermonecrotic toxins cleave the phosphodiester linkage between the phosphate and headgroup of certain phospholipids (sphingolipid and lysolipid substrates), forming an alcohol (often choline) and a cyclic phosphate. This toxin acts on sphingomyelin (SM). It may also act on ceramide phosphoethanolamine (CPE), lysophosphatidylcholine (LPC) and lysophosphatidylethanolamine (LPE), but not on lysophosphatidylserine (LPS), and lysophosphatidylglycerol (LPG). It acts by transphosphatidylation, releasing exclusively cyclic phosphate products as second products. Induces dermonecrosis, hemolysis, increased vascular permeability, edema, inflammatory response, and platelet aggregation. This is Dermonecrotic toxin LhSicTox-alphaIV2 from Loxosceles hirsuta (Recluse spider).